Here is a 34-residue protein sequence, read N- to C-terminus: Potassium channel toxin alpha-KTx 18.2 (34 aa).

3 disulfide bridges follow: cysteine 7–cysteine 26, cysteine 12–cysteine 31, and cysteine 16–cysteine 33.

In terms of tissue distribution, expressed by the venom gland.

The protein localises to the secreted. Functionally, reversibly blocks Shaker B potassium channels. The protein is Potassium channel toxin alpha-KTx 18.2 of Tityus discrepans (Venezuelan scorpion).